Consider the following 634-residue polypeptide: 1-deoxy-D-xylulose-5-phosphate synthase (634 aa).

Thiamine diphosphate contacts are provided by residues His73 and 114 to 116 (GHS). Mg(2+) is bound at residue Asp145. Residues 146–147 (GA), Asn174, Tyr285, and Glu365 contribute to the thiamine diphosphate site. A Mg(2+)-binding site is contributed by Asn174.

This sequence belongs to the transketolase family. DXPS subfamily. In terms of assembly, homodimer. Mg(2+) is required as a cofactor. Thiamine diphosphate serves as cofactor.

The enzyme catalyses D-glyceraldehyde 3-phosphate + pyruvate + H(+) = 1-deoxy-D-xylulose 5-phosphate + CO2. The protein operates within metabolic intermediate biosynthesis; 1-deoxy-D-xylulose 5-phosphate biosynthesis; 1-deoxy-D-xylulose 5-phosphate from D-glyceraldehyde 3-phosphate and pyruvate: step 1/1. In terms of biological role, catalyzes the acyloin condensation reaction between C atoms 2 and 3 of pyruvate and glyceraldehyde 3-phosphate to yield 1-deoxy-D-xylulose-5-phosphate (DXP). The polypeptide is 1-deoxy-D-xylulose-5-phosphate synthase (Desulforudis audaxviator (strain MP104C)).